Reading from the N-terminus, the 506-residue chain is Histidine ammonia-lyase (506 aa).

The segment at residues 141 to 143 is a cross-link (5-imidazolinone (Ala-Gly)); sequence ASG. A 2,3-didehydroalanine (Ser) modification is found at Ser142.

Belongs to the PAL/histidase family. Contains an active site 4-methylidene-imidazol-5-one (MIO), which is formed autocatalytically by cyclization and dehydration of residues Ala-Ser-Gly.

It localises to the cytoplasm. The catalysed reaction is L-histidine = trans-urocanate + NH4(+). It functions in the pathway amino-acid degradation; L-histidine degradation into L-glutamate; N-formimidoyl-L-glutamate from L-histidine: step 1/3. This Burkholderia multivorans (strain ATCC 17616 / 249) protein is Histidine ammonia-lyase.